The chain runs to 337 residues: MEPETEGPPPTIQVTPLQQMMASCAGAVVTSLMVTPLDVVKIRLQAQNNPFPKGKCFLYSNGLMDHICICEEESKKAWYKKPGNFHGTLDAFLKIVRNEGIKSLWSGLPPTLVMAVPATVIYFTCYEQLSTFLKTKLGENETRIPIVAGIVARFGAVTMISPLELIRTKMQSKTFSYKELYQIVSMKVSEDGWISLWKGWAPTILRDVPFSAMYWYNYENLRRWLCEKSDLYESTFMINFTAGALSGSFAAVATLPFDVVKTQKQTQLWTHEYCKFPEPLDMSTWSIMKNIVADRGFSGLFTGLIPRLVKIVPACAIMISSYELGKGFFQQQNVESR.

Solcar repeat units lie at residues 14–132 (VTPL…LSTF), 140–224 (NETR…LRRW), and 234–328 (STFM…GKGF). Transmembrane regions (helical) follow at residues 20–40 (MMASCAGAVVTSLMVTPLDVV), 104–124 (LWSGLPPTLVMAVPATVIYFT), 146–166 (IVAGIVARFGAVTMISPLELI), 200–221 (WAPTILRDVPFSAMYWYNYENL), 240–260 (FTAGALSGSFAAVATLPFDVV), and 299–319 (GLFTGLIPRLVKIVPACAIMI).

Belongs to the mitochondrial carrier (TC 2.A.29) family. In terms of tissue distribution, widely expressed at low level.

The protein resides in the mitochondrion inner membrane. It catalyses the reaction glutathione(in) = glutathione(out). Functionally, probable mitochondrial transporter required for glutathione import into mitochondria. Glutathione, which plays key roles in oxidative metabolism, is produced exclusively in the cytosol and is imported in many organelles. Mitochondrial glutathione is required for the activity and stability of proteins containing iron-sulfur clusters, as well as erythropoiesis. The sequence is that of Mitochondrial glutathione transporter SLC25A40 from Rattus norvegicus (Rat).